A 1306-amino-acid polypeptide reads, in one-letter code: Contactin-associated protein-like 5 (1306 aa).

A signal peptide spans 1–24 (MDSLPRLTSVLTLLFSGLWHLGLT). The Extracellular portion of the chain corresponds to 25–1237 (ATNYNCDDPL…PLTNAVRSDS (1213 aa)). The F5/8 type C domain maps to 30 to 174 (CDDPLASLLS…IGMRVEVYGC (145 aa)). Cys-30 and Cys-174 are joined by a disulfide. 2 Laminin G-like domains span residues 180 to 360 (VADF…TFSC) and 367 to 544 (PITF…IDLC). N-linked (GlcNAc...) asparagine glycans are attached at residues Asn-282, Asn-355, and Asn-496. Cys-329 and Cys-360 are oxidised to a cystine. Intrachain disulfides connect Cys-512-Cys-544, Cys-550-Cys-561, and Cys-555-Cys-570. The EGF-like 1 domain occupies 546–583 (IKDRCLPNYCEHGGSCSQSWTTFYCNCSDTSYTGATCH). N-linked (GlcNAc...) asparagine glycosylation occurs at Asn-571. Residues Cys-572 and Cys-582 are joined by a disulfide bond. Residues 584-790 (NSIYEQSCEV…LRCYGDRRFW (207 aa)) form the Fibrinogen C-terminal domain. N-linked (GlcNAc...) asparagine glycosylation occurs at Asn-622. Residues 791–956 (NAVSFYTEAS…KVTSGVRPGC (166 aa)) form the Laminin G-like 3 domain. Disulfide bonds link Cys-929–Cys-956, Cys-960–Cys-973, Cys-967–Cys-982, Cys-984–Cys-994, and Cys-1164–Cys-1199. Residues 957–995 (PGHCSSYGSICHNGGKCVEKHNGYLCDCTNSPYEGPFCK) enclose the EGF-like 2 domain. In terms of domain architecture, Laminin G-like 4 spans 1013 to 1199 (QEPYPVTKNI…VHGTLTESSC (187 aa)). Residues 1238-1258 (AVIGGVIAVVIFIIFCIIGIM) form a helical membrane-spanning segment. The Cytoplasmic portion of the chain corresponds to 1259–1306 (TRFLYQHKQSHRTSQMKEKEYPENLDSSFRNEIDLQNTVSECKREYFI).

This sequence belongs to the neurexin family.

It is found in the membrane. In terms of biological role, may play a role in the correct development and proper functioning of the peripheral and central nervous system and be involved in cell adhesion and intercellular communication. This Homo sapiens (Human) protein is Contactin-associated protein-like 5 (CNTNAP5).